We begin with the raw amino-acid sequence, 1625 residues long: Probable cation-transporting ATPase I (1625 aa).

Helical transmembrane passes span 148 to 168 (VVSA…PNSA), 177 to 197 (LAIL…GATV), 358 to 378 (LIAA…AGAI), 637 to 657 (ASES…LLLV), 673 to 693 (WLNP…WSAA), 778 to 798 (ILAV…ALLV), 968 to 988 (LTSK…ALAL), and 997 to 1017 (AVAD…PLVA). Catalysis depends on aspartate 1053, which acts as the 4-aspartylphosphate intermediate. Mg(2+) contacts are provided by aspartate 1340 and aspartate 1344. 3 consecutive transmembrane segments (helical) span residues 1401–1421 (ILVG…AFGA), 1432–1452 (LLVN…TSQF), and 1547–1567 (VIAT…TPVI).

This sequence belongs to the cation transport ATPase (P-type) (TC 3.A.3) family.

It is found in the cell membrane. It catalyses the reaction ATP + H2O = ADP + phosphate + H(+). In Mycobacterium tuberculosis (strain CDC 1551 / Oshkosh), this protein is Probable cation-transporting ATPase I (ctpI).